A 116-amino-acid chain; its full sequence is Large ribosomal subunit protein eL31 (116 aa).

Belongs to the eukaryotic ribosomal protein eL31 family.

This is Large ribosomal subunit protein eL31 (RPL31) from Chlamydomonas reinhardtii (Chlamydomonas smithii).